The sequence spans 1584 residues: Sterile alpha motif domain-containing protein 9-like (1584 aa).

Residues 14–79 (WTKEHVKKWV…RSYNKLNSKS (66 aa)) form the SAM domain. The segment at 76–122 (NSKSPESDNHDPGQLDNSKPSKTEHQKNPKHTKKEEENSMSSNIDYD) is disordered. The segment covering 80 to 112 (PESDNHDPGQLDNSKPSKTEHQKNPKHTKKEEE) has biased composition (basic and acidic residues).

In terms of assembly, interacts with EEA1. In terms of tissue distribution, widely expressed in adult and fetal tissues. Expressed in the cerebellum. Variable expression in tumors. Down-regulated in breast cancer.

The protein resides in the early endosome. It is found in the mitochondrion. In terms of biological role, may be involved in endosome fusion. Mediates down-regulation of growth factor signaling via internalization of growth factor receptors. The polypeptide is Sterile alpha motif domain-containing protein 9-like (SAMD9L) (Homo sapiens (Human)).